The chain runs to 478 residues: Centromere DNA-binding protein complex CBF3 subunit C (478 aa).

The tract at residues 206 to 251 (EVGEEKDVDVSGANSDENSSPSSTIKNKKRSASKRSHSDNGNVGAT) is disordered. The span at 217 to 230 (GANSDENSSPSSTI) shows a compositional bias: polar residues. Basic residues predominate over residues 231-240 (KNKKRSASKR).

In terms of assembly, component of the CBF3 copmplex, which is formed of CBF3A/CBF2, CBF3B/CEP3, CBF3C/CTF13 and CBF3D. CBF3C interacts with CBF3D and SGT1.

It localises to the nucleus. The protein resides in the chromosome. Its subcellular location is the centromere. Functionally, acts as a central component of the centromere DNA-binding protein complex CBF3, which is essential for chromosome segregation and movement of centromeres along microtubules. CBF3 is required for the recruitment of other kinetochore complexes to CEN DNA. It plays a role in the attachment of chromosomes to the spindle and binds selectively to a highly conserved DNA sequence called CDEIII, found in centromers and in several promoters. The association of CBF3C with CBF3D and SGT1 is required for CBF3C activation and CBF3 assembly. In Saccharomyces cerevisiae (strain ATCC 204508 / S288c) (Baker's yeast), this protein is Centromere DNA-binding protein complex CBF3 subunit C (CTF13).